A 519-amino-acid polypeptide reads, in one-letter code: Bifunctional NAD(P)H-hydrate repair enzyme Nnr (519 aa).

The tract at residues 1–233 (MMRCGEGYPG…DIGIPPAAEI (233 aa)) is NAD(P)H-hydrate epimerase. Residues 25–233 (MAAADINAEY…DIGIPPAAEI (209 aa)) enclose the YjeF N-terminal domain. Positions 71–75 (GNGGD) are NADPHX 1; for epimerase activity. K(+)-binding residues include Asn-72 and Asp-144. The tract at residues 148-154 (GTGVRGS) is NADPHX 1; for epimerase activity. Residue Asp-177 participates in (6S)-NADPHX binding. Ser-180 lines the K(+) pocket. Positions 235 to 515 (MGPGDLLRIP…DMIPSVMDPG (281 aa)) constitute a YjeF C-terminal domain. Residues 235 to 519 (MGPGDLLRIP…SVMDPGFYGF (285 aa)) form an ADP-dependent (S)-NAD(P)H-hydrate dehydratase region. Gly-338 contributes to the (6S)-NADPHX binding site. An NADPHX 2; for dehydratase activity region spans residues 389–395 (HMAEFSS). ADP contacts are provided by residues 428 to 432 (KGRID) and 447 to 456 (CPGMTVGGTG). Asp-457 contacts (6S)-NADPHX.

The protein in the N-terminal section; belongs to the NnrE/AIBP family. This sequence in the C-terminal section; belongs to the NnrD/CARKD family. The cofactor is K(+).

It catalyses the reaction (6S)-NADHX + ADP = AMP + phosphate + NADH + H(+). The enzyme catalyses (6S)-NADPHX + ADP = AMP + phosphate + NADPH + H(+). It carries out the reaction (6R)-NADHX = (6S)-NADHX. The catalysed reaction is (6R)-NADPHX = (6S)-NADPHX. Functionally, bifunctional enzyme that catalyzes the epimerization of the S- and R-forms of NAD(P)HX and the dehydration of the S-form of NAD(P)HX at the expense of ADP, which is converted to AMP. This allows the repair of both epimers of NAD(P)HX, a damaged form of NAD(P)H that is a result of enzymatic or heat-dependent hydration. The protein is Bifunctional NAD(P)H-hydrate repair enzyme Nnr (nnr) of Methanothermobacter thermautotrophicus (strain ATCC 29096 / DSM 1053 / JCM 10044 / NBRC 100330 / Delta H) (Methanobacterium thermoautotrophicum).